Reading from the N-terminus, the 105-residue chain is Circadian clock oscillator protein KaiB (105 aa).

The protein belongs to the KaiB family. May undergo a major conformational rearrangment; in the free state forms homooligomers. When bound to KaiC switches to a monomeric thioredoxin-fold (KaiB(fs)). The active oscillator complex is probably KaiC(6):KaiB(6).

Its function is as follows. Component of the KaiBC clock protein complex, which constitutes the main circadian regulator in cyanobacteria; it may modify the ATPase activity of KaiC. In terms of biological role, may be a metamorphic protein which reversibly switches between an inactive tetrameric fold and a rare, thioredoxin-like monomeric fold (KaiB(fs)). KaiB(fs) binds phospho-KaiC, and perhaps clock output effectors. This chain is Circadian clock oscillator protein KaiB, found in Prochlorococcus marinus (strain MIT 9312).